An 827-amino-acid chain; its full sequence is Cadherin-17 (827 aa).

The signal sequence occupies residues 1–21; sequence MVSAQLHFLCLLTLYLTGAYG. The Extracellular segment spans residues 22-786; the sequence is QEGKFSGPLK…NQVGIPTVGM (765 aa). 7 consecutive Cadherin domains span residues 29–127, 128–243, 244–339, 340–448, 449–565, 566–666, and 667–776; these read PLKP…TFLQ, TKYE…APEP, VEIR…PPTC, LSQV…IPIF, ERSD…VPVF, PQQI…PPRL, and AKDY…RPAG. 7 N-linked (GlcNAc...) asparagine glycosylation sites follow: Asn-148, Asn-183, Asn-249, Asn-418, Asn-545, Asn-573, and Asn-721. A helical transmembrane segment spans residues 787–807; the sequence is AVGILLTTFLVIGIILAVVFI. Residues 808–827 are Cytoplasmic-facing; the sequence is RMRKDKVEDPQSPENKPLRS.

Liver and intestine.

The protein resides in the cell membrane. Its function is as follows. Cadherins are calcium-dependent cell adhesion proteins. They preferentially interact with themselves in a homophilic manner in connecting cells; cadherins may thus contribute to the sorting of heterogeneous cell types. LI-cadherin may have a role in the morphological organization of liver and intestine. The sequence is that of Cadherin-17 (Cdh17) from Rattus norvegicus (Rat).